The following is a 337-amino-acid chain: MVKIVVRIATYASHSALQILKGAKDEGFETIAFGSERVKPLYTKYFPVADYFLVGKYPEDELLELNAVVIPTGSFVAHLGVELVERMKVPYFGNKRVLKWESDRNLERKWLEKAKLKLPRVYDDPDDIDRPVIVKPHGAKGGRGYFIAKDPQDFWTKVEKFLGIKDKEDLKNVQIQEYVIGVPVYPHYFYSKLTRELELMSIDRRYESNVDAIGRIPSKDQLELELDITYTVIGNIPLVLRESLLMDVIEAGERTVKAAEELMGGLWGPFCLEGVFTPDLDFVVFEISARIVAGTNPFINGSPYTWLKYDEPMSTGRRIAREIRLAIEEDKLDEVVS.

2 residues coordinate 5-amino-1-(5-phospho-beta-D-ribosyl)imidazole-4-carboxamide: His-14 and Ser-74. One can recognise an ATP-grasp domain in the interval 81–328 (VELVERMKVP…IAREIRLAIE (248 aa)). ATP is bound by residues 125–185 (PDDI…VPVY) and Glu-207. Asn-235 provides a ligand contact to 5-amino-1-(5-phospho-beta-D-ribosyl)imidazole-4-carboxamide. The Mg(2+) site is built by Glu-273 and Glu-286.

The protein belongs to the phosphohexose mutase family. The cofactor is Mg(2+). Requires Mn(2+) as cofactor.

It carries out the reaction 5-amino-1-(5-phospho-beta-D-ribosyl)imidazole-4-carboxamide + formate + ATP = 5-formamido-1-(5-phospho-D-ribosyl)imidazole-4-carboxamide + ADP + phosphate. It functions in the pathway purine metabolism; IMP biosynthesis via de novo pathway; 5-formamido-1-(5-phospho-D-ribosyl)imidazole-4-carboxamide from 5-amino-1-(5-phospho-D-ribosyl)imidazole-4-carboxamide (formate route): step 1/1. Catalyzes the ATP- and formate-dependent formylation of 5-aminoimidazole-4-carboxamide-1-beta-d-ribofuranosyl 5'-monophosphate (AICAR) to 5-formaminoimidazole-4-carboxamide-1-beta-d-ribofuranosyl 5'-monophosphate (FAICAR) in the absence of folates. This is 5-formaminoimidazole-4-carboxamide-1-(beta)-D-ribofuranosyl 5'-monophosphate synthetase from Pyrococcus abyssi (strain GE5 / Orsay).